A 144-amino-acid polypeptide reads, in one-letter code: Large ribosomal subunit protein uL15 (144 aa).

Residues 1–54 (MRLNTLSPAPGRVSAKKRVGRGIGSGLGKTAGRGHKGLKSRSGGSVKPGFEGGQ) are disordered. A compositionally biased stretch (gly residues) spans 21–31 (RGIGSGLGKTA).

It belongs to the universal ribosomal protein uL15 family. Part of the 50S ribosomal subunit.

Functionally, binds to the 23S rRNA. This chain is Large ribosomal subunit protein uL15, found in Saccharophagus degradans (strain 2-40 / ATCC 43961 / DSM 17024).